A 469-amino-acid chain; its full sequence is Argininosuccinate lyase (469 aa).

Belongs to the lyase 1 family. Argininosuccinate lyase subfamily.

The protein localises to the cytoplasm. It carries out the reaction 2-(N(omega)-L-arginino)succinate = fumarate + L-arginine. The protein operates within amino-acid biosynthesis; L-arginine biosynthesis; L-arginine from L-ornithine and carbamoyl phosphate: step 3/3. The polypeptide is Argininosuccinate lyase (Paracoccus denitrificans (strain Pd 1222)).